Reading from the N-terminus, the 420-residue chain is Tyrosine--tRNA ligase (420 aa).

L-tyrosine is bound at residue tyrosine 36. The short motif at 41–50 (PTADSLHIGH) is the 'HIGH' region element. The L-tyrosine site is built by tyrosine 170 and glutamine 174. The 'KMSKS' region signature appears at 231 to 235 (KFGKT). Position 234 (lysine 234) interacts with ATP. The region spanning 353–420 (RNIVEVIVET…KKKYFMVNYK (68 aa)) is the S4 RNA-binding domain.

This sequence belongs to the class-I aminoacyl-tRNA synthetase family. TyrS type 1 subfamily. As to quaternary structure, homodimer.

Its subcellular location is the cytoplasm. The catalysed reaction is tRNA(Tyr) + L-tyrosine + ATP = L-tyrosyl-tRNA(Tyr) + AMP + diphosphate + H(+). Functionally, catalyzes the attachment of tyrosine to tRNA(Tyr) in a two-step reaction: tyrosine is first activated by ATP to form Tyr-AMP and then transferred to the acceptor end of tRNA(Tyr). In Staphylococcus saprophyticus subsp. saprophyticus (strain ATCC 15305 / DSM 20229 / NCIMB 8711 / NCTC 7292 / S-41), this protein is Tyrosine--tRNA ligase.